Reading from the N-terminus, the 190-residue chain is Glutathione peroxidase 2 (190 aa).

Sec40 is an active-site residue. Position 40 (Sec40) is a non-standard amino acid, selenocysteine.

It belongs to the glutathione peroxidase family. As to quaternary structure, homotetramer.

The protein localises to the cytoplasm. Its subcellular location is the cytosol. The enzyme catalyses 2 glutathione + H2O2 = glutathione disulfide + 2 H2O. The catalysed reaction is a hydroperoxy polyunsaturated fatty acid + 2 glutathione = a hydroxy polyunsaturated fatty acid + glutathione disulfide + H2O. It carries out the reaction tert-butyl hydroperoxide + 2 glutathione = tert-butanol + glutathione disulfide + H2O. It catalyses the reaction cumene hydroperoxide + 2 glutathione = 2-phenylpropan-2-ol + glutathione disulfide + H2O. The enzyme catalyses (13S)-hydroperoxy-(9Z,11E)-octadecadienoate + 2 glutathione = (13S)-hydroxy-(9Z,11E)-octadecadienoate + glutathione disulfide + H2O. The catalysed reaction is (5S)-hydroperoxy-(6E,8Z,11Z,14Z)-eicosatetraenoate + 2 glutathione = (5S)-hydroxy-(6E,8Z,11Z,14Z)-eicosatetraenoate + glutathione disulfide + H2O. It carries out the reaction (12R)-hydroperoxy-(5Z,8Z,10E,14Z)-eicosatetraenoate + 2 glutathione = (12R)-hydroxy-(5Z,8Z,10E,14Z)-eicosatetraenoate + glutathione disulfide + H2O. It catalyses the reaction (15S)-hydroperoxy-(5Z,8Z,11Z,13E)-eicosatetraenoate + 2 glutathione = (15S)-hydroxy-(5Z,8Z,11Z,13E)-eicosatetraenoate + glutathione disulfide + H2O. Functionally, catalyzes the reduction of hydroperoxides in a glutathione-dependent manner thus regulating cellular redox homeostasis. Can reduce small soluble hydroperoxides such as H2O2, cumene hydroperoxide and tert-butyl hydroperoxide, as well as several fatty acid-derived hydroperoxides. Cannot reduce phosphatidycholine hydroperoxide. The sequence is that of Glutathione peroxidase 2 (GPX2) from Pongo pygmaeus (Bornean orangutan).